The chain runs to 144 residues: 3-hydroxyacyl-[acyl-carrier-protein] dehydratase FabZ (144 aa).

H51 is an active-site residue.

It belongs to the thioester dehydratase family. FabZ subfamily.

It localises to the cytoplasm. It carries out the reaction a (3R)-hydroxyacyl-[ACP] = a (2E)-enoyl-[ACP] + H2O. Functionally, involved in unsaturated fatty acids biosynthesis. Catalyzes the dehydration of short chain beta-hydroxyacyl-ACPs and long chain saturated and unsaturated beta-hydroxyacyl-ACPs. In Clostridium botulinum (strain Okra / Type B1), this protein is 3-hydroxyacyl-[acyl-carrier-protein] dehydratase FabZ.